A 280-amino-acid polypeptide reads, in one-letter code: Protein HEAT-INDUCED TAS1 TARGET 4 (280 aa).

It belongs to the heat induced plant HTT protein family. In terms of tissue distribution, expressed in seedlings, leaves, stems, inflorescences and siliques.

The protein resides in the cytoplasm. Its subcellular location is the nucleus. Its function is as follows. Mediates both basal and acquired thermotolerance. This is Protein HEAT-INDUCED TAS1 TARGET 4 from Arabidopsis thaliana (Mouse-ear cress).